Reading from the N-terminus, the 380-residue chain is uncharacterized protein (380 aa).

The disordered stretch occupies residues 251–275 (NMSERPPTPSHDTASSSTSTDPNPL). Residues 260–272 (SHDTASSSTSTDP) show a composition bias toward low complexity.

This is an uncharacterized protein from Allium cepa var. aggregatum (Shallot).